We begin with the raw amino-acid sequence, 485 residues long: Efflux pump bik6 (485 aa).

Transmembrane regions (helical) follow at residues 42–62 (VYTTALWALTTCWITFASAIY), 86–106 (LLIFGFALGPMLWAPLCEVYG), 108–128 (KWPALAPYFISAAFAFGTATA), 139–159 (FFAGVFGSSPISITGGSIVDI), 172–192 (YGITIAAAPTLGPIIGGAFIA), and 199–219 (WTEYLTGIVMMVQFVLDALWL). A glycan (N-linked (GlcNAc...) asparagine) is linked at N241. Transmembrane regions (helical) follow at residues 269–289 (MLLDPICLLLTIYTSFVYAIL), 306–326 (WGPVVSQLPFLSLLIGCLFAA), 353–373 (LPPMMVGGFAFSAGLFLFGWT), 379–399 (SSPWPSIIGVFLTGVGFTTIF), 417–437 (AIAANTFVRSMAAGAFPLFVW), and 447–467 (WGSTIFACISVLLLPAPFLFF).

This sequence belongs to the major facilitator superfamily.

Its subcellular location is the membrane. Efflux pump; part of the gene cluster that mediates the biosynthesis of bikaverin, a red pigment also considered as a mycotoxin. The chain is Efflux pump bik6 from Gibberella fujikuroi (strain CBS 195.34 / IMI 58289 / NRRL A-6831) (Bakanae and foot rot disease fungus).